The chain runs to 396 residues: Tryptophan synthase beta chain (396 aa).

K86 is modified (N6-(pyridoxal phosphate)lysine).

The protein belongs to the TrpB family. Tetramer of two alpha and two beta chains. It depends on pyridoxal 5'-phosphate as a cofactor.

It carries out the reaction (1S,2R)-1-C-(indol-3-yl)glycerol 3-phosphate + L-serine = D-glyceraldehyde 3-phosphate + L-tryptophan + H2O. It functions in the pathway amino-acid biosynthesis; L-tryptophan biosynthesis; L-tryptophan from chorismate: step 5/5. The beta subunit is responsible for the synthesis of L-tryptophan from indole and L-serine. This Pectobacterium carotovorum subsp. carotovorum (strain PC1) protein is Tryptophan synthase beta chain.